Here is a 386-residue protein sequence, read N- to C-terminus: Succinate--CoA ligase [ADP-forming] subunit beta (386 aa).

In terms of domain architecture, ATP-grasp spans Lys9 to Glu244. ATP is bound by residues Lys46, Gly53–Gly55, Glu99, Ala102, and Glu107. Mg(2+)-binding residues include Asn199 and Asp213. Substrate-binding positions include Asn264 and Gly321 to Met323.

This sequence belongs to the succinate/malate CoA ligase beta subunit family. As to quaternary structure, heterotetramer of two alpha and two beta subunits. Requires Mg(2+) as cofactor.

The catalysed reaction is succinate + ATP + CoA = succinyl-CoA + ADP + phosphate. It catalyses the reaction GTP + succinate + CoA = succinyl-CoA + GDP + phosphate. It functions in the pathway carbohydrate metabolism; tricarboxylic acid cycle; succinate from succinyl-CoA (ligase route): step 1/1. In terms of biological role, succinyl-CoA synthetase functions in the citric acid cycle (TCA), coupling the hydrolysis of succinyl-CoA to the synthesis of either ATP or GTP and thus represents the only step of substrate-level phosphorylation in the TCA. The beta subunit provides nucleotide specificity of the enzyme and binds the substrate succinate, while the binding sites for coenzyme A and phosphate are found in the alpha subunit. This chain is Succinate--CoA ligase [ADP-forming] subunit beta, found in Azoarcus sp. (strain BH72).